Consider the following 386-residue polypeptide: Cytochrome b (386 aa).

The next 4 membrane-spanning stretches (helical) occupy residues 32-52, 76-98, 113-133, and 179-199; these read FGSL…TLAM, WLIR…LHVG, TWII…LGYV, and FFAL…MHLI. The heme b site is built by H82 and H96. Heme b contacts are provided by H183 and H197. Residue H202 coordinates a ubiquinone. The next 4 membrane-spanning stretches (helical) occupy residues 226 to 246, 290 to 310, 322 to 342, and 349 to 369; these read YIFK…LFVF, LLGV…PITD, LSKV…QLGA, and FIEF…VIMP.

The protein belongs to the cytochrome b family. Fungal cytochrome b-c1 complex contains 10 subunits; 3 respiratory subunits, 2 core proteins and 5 low-molecular weight proteins. Cytochrome b-c1 complex is a homodimer. It depends on heme b as a cofactor.

It is found in the mitochondrion inner membrane. Its function is as follows. Component of the ubiquinol-cytochrome c reductase complex (complex III or cytochrome b-c1 complex) that is part of the mitochondrial respiratory chain. The b-c1 complex mediates electron transfer from ubiquinol to cytochrome c. Contributes to the generation of a proton gradient across the mitochondrial membrane that is then used for ATP synthesis. The polypeptide is Cytochrome b (cob) (Talaromyces marneffei (Penicillium marneffei)).